We begin with the raw amino-acid sequence, 551 residues long: Glucans biosynthesis protein D (551 aa).

The segment at residues 1–32 (MNRRRFLQGSLAMAALSGTTGLSTLFSRAAFA) is a signal peptide (tat-type signal).

It belongs to the OpgD/OpgG family. In terms of processing, predicted to be exported by the Tat system. The position of the signal peptide cleavage has not been experimentally proven.

It localises to the periplasm. Its pathway is glycan metabolism; osmoregulated periplasmic glucan (OPG) biosynthesis. In terms of biological role, probably involved in the control of the structural glucose backbone of osmoregulated periplasmic glucans (OPGs). The chain is Glucans biosynthesis protein D from Enterobacter sp. (strain 638).